The sequence spans 113 residues: Large ribosomal subunit protein bL19 (113 aa).

Belongs to the bacterial ribosomal protein bL19 family.

Its function is as follows. This protein is located at the 30S-50S ribosomal subunit interface and may play a role in the structure and function of the aminoacyl-tRNA binding site. This Corynebacterium kroppenstedtii (strain DSM 44385 / JCM 11950 / CIP 105744 / CCUG 35717) protein is Large ribosomal subunit protein bL19.